A 1073-amino-acid polypeptide reads, in one-letter code: Probable cellulose synthase A catalytic subunit 2 [UDP-forming] (1073 aa).

Topologically, residues methionine 1 to methionine 270 are cytoplasmic. Residues cysteine 13, cysteine 16, cysteine 32, cysteine 35, cysteine 40, cysteine 43, cysteine 55, and cysteine 58 each contribute to the Zn(2+) site. Residues cysteine 13 to lysine 59 form an RING-type; degenerate zinc finger. A disordered region spans residues lysine 66–lysine 98. A compositionally biased stretch (acidic residues) spans aspartate 74–serine 85. A helical transmembrane segment spans residues valine 271–valine 291. Topologically, residues arginine 292–asparagine 293 are extracellular. Residues alanine 294–leucine 314 form a helical membrane-spanning segment. At aspartate 315 to serine 856 the chain is on the cytoplasmic side. Serine 353, lysine 359, glutamate 360, and aspartate 389 together coordinate UDP-alpha-D-glucose. Aspartate 389 is a catalytic residue. The stretch at valine 443 to valine 470 forms a coiled coil. Residue lysine 530 coordinates UDP-alpha-D-glucose. Mn(2+)-binding residues include lysine 531 and aspartate 555. The interval glycine 655 to histidine 676 is disordered. Residue aspartate 773 is part of the active site. Residues isoleucine 857–isoleucine 877 form a helical membrane-spanning segment. Residues proline 878 to asparagine 882 lie on the Extracellular side of the membrane. Residues phenylalanine 883–methionine 903 form a helical membrane-spanning segment. Over arginine 904–glutamine 918 the chain is Cytoplasmic. Residues phenylalanine 919–valine 939 form a helical membrane-spanning segment. Residues leucine 940–threonine 969 lie on the Extracellular side of the membrane. A helical membrane pass occupies residues threonine 970 to isoleucine 990. Over serine 991–tryptophan 1001 the chain is Cytoplasmic. The helical transmembrane segment at glycine 1002–leucine 1022 threads the bilayer. Residues lysine 1023–arginine 1031 are Extracellular-facing. The helical transmembrane segment at threonine 1032–valine 1052 threads the bilayer. Over arginine 1053–cysteine 1073 the chain is Cytoplasmic.

This sequence belongs to the glycosyltransferase 2 family. Plant cellulose synthase subfamily. Requires Mn(2+) as cofactor. It depends on Zn(2+) as a cofactor.

The protein localises to the cell membrane. The catalysed reaction is [(1-&gt;4)-beta-D-glucosyl](n) + UDP-alpha-D-glucose = [(1-&gt;4)-beta-D-glucosyl](n+1) + UDP + H(+). It functions in the pathway glycan metabolism; plant cellulose biosynthesis. Its function is as follows. Probable catalytic subunit of cellulose synthase terminal complexes ('rosettes'), required for beta-1,4-glucan microfibril crystallization, a major mechanism of the cell wall formation. The protein is Probable cellulose synthase A catalytic subunit 2 [UDP-forming] (CESA2) of Oryza sativa subsp. japonica (Rice).